The chain runs to 123 residues: S-adenosylmethionine decarboxylase proenzyme 2 (123 aa).

Catalysis depends on Ser65, which acts as the Schiff-base intermediate with substrate; via pyruvic acid. Pyruvic acid (Ser); by autocatalysis is present on Ser65. The Proton acceptor; for processing activity role is filled by His70. Residue Cys85 is the Proton donor; for catalytic activity of the active site.

Belongs to the prokaryotic AdoMetDC family. Type 1 subfamily. As to quaternary structure, heterotetramer of two alpha and two beta chains arranged as a dimer of alpha/beta heterodimers. Pyruvate serves as cofactor. Post-translationally, is synthesized initially as an inactive proenzyme. Formation of the active enzyme involves a self-maturation process in which the active site pyruvoyl group is generated from an internal serine residue via an autocatalytic post-translational modification. Two non-identical subunits are generated from the proenzyme in this reaction, and the pyruvate is formed at the N-terminus of the alpha chain, which is derived from the carboxyl end of the proenzyme. The post-translation cleavage follows an unusual pathway, termed non-hydrolytic serinolysis, in which the side chain hydroxyl group of the serine supplies its oxygen atom to form the C-terminus of the beta chain, while the remainder of the serine residue undergoes an oxidative deamination to produce ammonia and the pyruvoyl group blocking the N-terminus of the alpha chain.

It carries out the reaction S-adenosyl-L-methionine + H(+) = S-adenosyl 3-(methylsulfanyl)propylamine + CO2. It participates in amine and polyamine biosynthesis; S-adenosylmethioninamine biosynthesis; S-adenosylmethioninamine from S-adenosyl-L-methionine: step 1/1. In terms of biological role, catalyzes the decarboxylation of S-adenosylmethionine to S-adenosylmethioninamine (dcAdoMet), the propylamine donor required for the synthesis of the polyamines spermine and spermidine from the diamine putrescine. The protein is S-adenosylmethionine decarboxylase proenzyme 2 of Bacillus cereus (strain ATCC 14579 / DSM 31 / CCUG 7414 / JCM 2152 / NBRC 15305 / NCIMB 9373 / NCTC 2599 / NRRL B-3711).